We begin with the raw amino-acid sequence, 227 residues long: 2,3-bisphosphoglycerate-dependent phosphoglycerate mutase (227 aa).

Residues 7-14, 20-21, Arg-59, 86-89, Lys-97, 113-114, and 182-183 each bind substrate; these read RHGQSEWN, TG, ERHY, RR, and GN. Catalysis depends on His-8, which acts as the Tele-phosphohistidine intermediate. Glu-86 serves as the catalytic Proton donor/acceptor.

The protein belongs to the phosphoglycerate mutase family. BPG-dependent PGAM subfamily. Homodimer.

It catalyses the reaction (2R)-2-phosphoglycerate = (2R)-3-phosphoglycerate. It participates in carbohydrate degradation; glycolysis; pyruvate from D-glyceraldehyde 3-phosphate: step 3/5. Catalyzes the interconversion of 2-phosphoglycerate and 3-phosphoglycerate. The protein is 2,3-bisphosphoglycerate-dependent phosphoglycerate mutase of Neisseria meningitidis serogroup C (strain 053442).